The following is a 574-amino-acid chain: Sulfate adenylyltransferase (574 aa).

The N-terminal stretch occupies residues 1-169; that stretch reads MANPPHGGVL…IEAINKLNHY (169 aa). A catalytic region spans residues 170 to 394; the sequence is DYVALRYTPA…LRESSPPRHT (225 aa). Gln197 contacts sulfate. Residues 197-200 and 291-294 each bind ATP; these read QTRN and GRDH. Residues Thr198, Arg199, and Asn200 contribute to the active site. Arg199 contacts sulfate. Ala295 provides a ligand contact to sulfate. Val333 provides a ligand contact to ATP. Positions 395-574 are allosteric regulation domain; adenylyl-sulfate kinase-like; that stretch reads QGFTIFLTGY…LETEGFFDRS (180 aa). Residues 434–437, Arg451, 477–478, and Arg516 contribute to the 3'-phosphoadenylyl sulfate site; these read DTVR and IA.

It in the N-terminal section; belongs to the sulfate adenylyltransferase family. This sequence in the C-terminal section; belongs to the APS kinase family. Homohexamer. Dimer of trimers.

Its subcellular location is the cytoplasm. It catalyses the reaction sulfate + ATP + H(+) = adenosine 5'-phosphosulfate + diphosphate. It participates in sulfur metabolism; hydrogen sulfide biosynthesis; sulfite from sulfate: step 1/3. Its activity is regulated as follows. Allosterically inhibited by 3'-phosphoadenosine 5'-phosphosulfate (PAPS). Catalyzes the first intracellular reaction of sulfate assimilation, forming adenosine-5'-phosphosulfate (APS) from inorganic sulfate and ATP. Plays an important role in sulfate activation as a component of the biosynthesis pathway of sulfur-containing amino acids. The polypeptide is Sulfate adenylyltransferase (Aspergillus fumigatus (strain ATCC MYA-4609 / CBS 101355 / FGSC A1100 / Af293) (Neosartorya fumigata)).